The primary structure comprises 248 residues: Triosephosphate isomerase (248 aa).

Residue 9-11 (NWK) coordinates substrate. Catalysis depends on His94, which acts as the Electrophile. Glu166 serves as the catalytic Proton acceptor. Substrate is bound by residues Gly172, Ser211, and 232–233 (GG).

This sequence belongs to the triosephosphate isomerase family. Homodimer.

Its subcellular location is the cytoplasm. The enzyme catalyses D-glyceraldehyde 3-phosphate = dihydroxyacetone phosphate. It functions in the pathway carbohydrate biosynthesis; gluconeogenesis. Its pathway is carbohydrate degradation; glycolysis; D-glyceraldehyde 3-phosphate from glycerone phosphate: step 1/1. Functionally, involved in the gluconeogenesis. Catalyzes stereospecifically the conversion of dihydroxyacetone phosphate (DHAP) to D-glyceraldehyde-3-phosphate (G3P). This chain is Triosephosphate isomerase, found in Ruthia magnifica subsp. Calyptogena magnifica.